Reading from the N-terminus, the 1173-residue chain is BRCA2-interacting transcriptional repressor EMSY (1173 aa).

Residues 16-100 (CKRILRKLEL…EWSIEGRRLV (85 aa)) enclose the ENT domain. The span at 149-177 (STTSTPPSASAPSSSSAAVKSPRPASPAS) shows a compositional bias: low complexity. Disordered stretches follow at residues 149–179 (STTS…ASNV), 191–216 (KSVS…SSPV), 676–720 (NRSA…DAPP), 797–816 (SAEQ…ESDA), 905–998 (RVCE…GAQV), 1020–1046 (PRAP…EKPS), and 1139–1173 (DYTS…DQSQ). Low complexity predominate over residues 683-693 (TTSTHTSAAAA). Composition is skewed to low complexity over residues 911 to 921 (SSSSSSSSSSS) and 937 to 953 (SSSS…TPHT). Polar residues-rich tracts occupy residues 961 to 976 (QAPT…TQLS) and 989 to 998 (SSKTSSGAQV). The span at 1025–1040 (SSSSSSEAALKLQAES) shows a compositional bias: low complexity. Over residues 1148–1159 (EQAMEQEVDSSN) the composition is skewed to acidic residues.

Homodimer.

The protein localises to the nucleus. Functionally, regulator which is able to repress transcription, possibly via its interaction with a multiprotein chromatin remodeling complex that modifies the chromatin. The chain is BRCA2-interacting transcriptional repressor EMSY from Danio rerio (Zebrafish).